Consider the following 171-residue polypeptide: UPF0312 protein SAV2687 (171 aa).

This sequence belongs to the UPF0312 family.

The chain is UPF0312 protein SAV2687 from Staphylococcus aureus (strain Mu50 / ATCC 700699).